We begin with the raw amino-acid sequence, 363 residues long: Small ribosomal subunit biogenesis GTPase RsgA (363 aa).

Residues 112–268 (HQQVIAANID…LIDTPGMREL (157 aa)) form the CP-type G domain. GTP is bound by residues 157–160 (TKAD) and 210–218 (GSSGAGKST). Residues Cys-291, Cys-296, His-298, and Cys-304 each coordinate Zn(2+). Residues 340-363 (RVAQNNRGKGSGKRPASIDRPGRR) form a disordered region.

This sequence belongs to the TRAFAC class YlqF/YawG GTPase family. RsgA subfamily. As to quaternary structure, monomer. Associates with 30S ribosomal subunit, binds 16S rRNA. Zn(2+) is required as a cofactor.

The protein resides in the cytoplasm. Functionally, one of several proteins that assist in the late maturation steps of the functional core of the 30S ribosomal subunit. Helps release RbfA from mature subunits. May play a role in the assembly of ribosomal proteins into the subunit. Circularly permuted GTPase that catalyzes slow GTP hydrolysis, GTPase activity is stimulated by the 30S ribosomal subunit. The sequence is that of Small ribosomal subunit biogenesis GTPase RsgA from Xanthomonas oryzae pv. oryzae (strain PXO99A).